Reading from the N-terminus, the 277-residue chain is Small ribosomal subunit protein uS2 (277 aa).

Residues 255–277 (AVATTDEASAPSAAATETTTEEG) are disordered. Low complexity predominate over residues 257 to 277 (ATTDEASAPSAAATETTTEEG).

The protein belongs to the universal ribosomal protein uS2 family.

The polypeptide is Small ribosomal subunit protein uS2 (Mycobacteroides abscessus (strain ATCC 19977 / DSM 44196 / CCUG 20993 / CIP 104536 / JCM 13569 / NCTC 13031 / TMC 1543 / L948) (Mycobacterium abscessus)).